Consider the following 258-residue polypeptide: Regulatory protein RecX (258 aa).

The protein belongs to the RecX family.

It localises to the cytoplasm. Functionally, modulates RecA activity. In Streptococcus pyogenes serotype M12 (strain MGAS2096), this protein is Regulatory protein RecX.